A 314-amino-acid chain; its full sequence is Ornithine carbamoyltransferase (314 aa).

Residues 58 to 61, Q85, R109, and 136 to 139 each bind carbamoyl phosphate; these read STRT and HPLQ. L-ornithine is bound by residues N168, D232, and 236–237; that span reads SM. Carbamoyl phosphate contacts are provided by residues 272 to 273 and R300; that span reads CL.

It belongs to the aspartate/ornithine carbamoyltransferase superfamily. OTCase family.

The protein localises to the cytoplasm. The enzyme catalyses carbamoyl phosphate + L-ornithine = L-citrulline + phosphate + H(+). Its pathway is amino-acid biosynthesis; L-arginine biosynthesis; L-arginine from L-ornithine and carbamoyl phosphate: step 1/3. In terms of biological role, reversibly catalyzes the transfer of the carbamoyl group from carbamoyl phosphate (CP) to the N(epsilon) atom of ornithine (ORN) to produce L-citrulline. This Hyperthermus butylicus (strain DSM 5456 / JCM 9403 / PLM1-5) protein is Ornithine carbamoyltransferase.